The following is a 487-amino-acid chain: Structure-specific endonuclease subunit SLX1 (487 aa).

The region spanning 27–109 (PFYACYLLRS…QKPELSRHLR (83 aa)) is the GIY-YIG domain. The segment at 44-69 (RTYVGSTPDPPRRIRQHNGELKQGAW) is disordered. The segment at 262–328 (CHLCQERIAF…LPYQGLCPNC (67 aa)) adopts an SLX1-type zinc-finger fold. The segment covering 359–396 (KAEKAEKAEKAEKAEKAEKAEKAGRKVRQREMKTKKGD) has biased composition (basic and acidic residues). Disordered stretches follow at residues 359–407 (KAEK…QPES) and 433–475 (PARS…SEPE). Residues 397–407 (QSNGTVAQPES) show a composition bias toward polar residues. A compositionally biased stretch (basic and acidic residues) spans 438–455 (KSKDVGGEGIRHSTHTDD). Residues 465–475 (ETEDESESEPE) show a composition bias toward acidic residues.

Belongs to the SLX1 family. As to quaternary structure, forms a heterodimer with SLX4. A divalent metal cation is required as a cofactor.

The protein resides in the nucleus. In terms of biological role, catalytic subunit of the SLX1-SLX4 structure-specific endonuclease that resolves DNA secondary structures generated during DNA repair and recombination. Has endonuclease activity towards branched DNA substrates, introducing single-strand cuts in duplex DNA close to junctions with ss-DNA. The chain is Structure-specific endonuclease subunit SLX1 from Cryptococcus neoformans var. neoformans serotype D (strain B-3501A) (Filobasidiella neoformans).